A 906-amino-acid polypeptide reads, in one-letter code: Probable RNA-directed DNA polymerase from transposon BS (906 aa).

In terms of domain architecture, Reverse transcriptase spans 482–758; that stretch reads AILRVQFFPK…SQAKYLGITL (277 aa).

Mg(2+) serves as cofactor. Requires Mn(2+) as cofactor.

It catalyses the reaction DNA(n) + a 2'-deoxyribonucleoside 5'-triphosphate = DNA(n+1) + diphosphate. This chain is Probable RNA-directed DNA polymerase from transposon BS, found in Drosophila melanogaster (Fruit fly).